Reading from the N-terminus, the 284-residue chain is Sulfotransferase 4A1 (284 aa).

Phosphothreonine is present on residues Thr8, Thr11, and Thr205.

It belongs to the sulfotransferase 1 family. As to expression, highly expressed in the cerebral cortex and frontal lobe, slightly less in the cerebellum, occipital and temporal lobes, relatively low in the medulla and putamen, and lowest in the spinal cord. No expression detected in the pancreas. Highly expressed in fetal brain and occipital lobe, slightly less in the whole brain, frontal lobe, hippocampus, and lung, very low expression in cerebellum, medulla oblongata, temporal lobe, testis, kidney and appendix.

It is found in the cytoplasm. In terms of biological role, atypical sulfotransferase family member with very low affinity for 3'-phospho-5'-adenylyl sulfate (PAPS) and very low catalytic activity towards L-triiodothyronine, thyroxine, estrone, p-nitrophenol, 2-naphthylamine, and 2-beta-naphthol. May have a role in the metabolism of drugs and neurotransmitters in the CNS. In Homo sapiens (Human), this protein is Sulfotransferase 4A1 (SULT4A1).